Here is a 419-residue protein sequence, read N- to C-terminus: F-box/FBD/LRR-repeat protein At4g26340 (419 aa).

An F-box domain is found at 1–53 (MDRISQLSDDLLLQILSFIPGKDVVATSLLSKRWQSLWMLVSELEYDDSYHTG). LRR repeat units lie at residues 55-81 (YKSF…HLNL), 132-159 (TLRL…HLKT), 160-185 (VDYE…FVER), 187-208 (DQDL…SMID), 226-253 (YLNI…HVDI), 254-284 (TQGV…MCPS), and 299-324 (VVKG…KLID). The FBD domain maps to 339–389 (GWKLPSSVPECLLFSLEAFEWIGYKGRRGDREVATYVLKNAACLRTAKFSP).

This chain is F-box/FBD/LRR-repeat protein At4g26340, found in Arabidopsis thaliana (Mouse-ear cress).